The sequence spans 600 residues: uncharacterized protein (600 aa).

4Fe-4S ferredoxin-type domains are found at residues 14 to 44 and 53 to 82; these read RLAI…MGEK and GKPV…IIGL. ABC transporter domains are found at residues 77-318 and 348-563; these read ISII…YLYG and LLSY…LKEM. ATP contacts are provided by residues 117–124 and 380–387; these read GQNGIGKS and GPNGIGKT. A compositionally biased stretch (basic and acidic residues) spans 569-594; the sequence is RDPETGRPRANKEGSQRDIMQKEKGE. Residues 569–600 are disordered; the sequence is RDPETGRPRANKEGSQRDIMQKEKGEYYYVDE.

It belongs to the ABC transporter superfamily.

This is an uncharacterized protein from Methanocaldococcus jannaschii (strain ATCC 43067 / DSM 2661 / JAL-1 / JCM 10045 / NBRC 100440) (Methanococcus jannaschii).